The following is a 456-amino-acid chain: Probable glycine dehydrogenase (decarboxylating) subunit 1 (456 aa).

It belongs to the GcvP family. N-terminal subunit subfamily. As to quaternary structure, the glycine cleavage system is composed of four proteins: P, T, L and H. In this organism, the P 'protein' is a heterodimer of two subunits.

It catalyses the reaction N(6)-[(R)-lipoyl]-L-lysyl-[glycine-cleavage complex H protein] + glycine + H(+) = N(6)-[(R)-S(8)-aminomethyldihydrolipoyl]-L-lysyl-[glycine-cleavage complex H protein] + CO2. The glycine cleavage system catalyzes the degradation of glycine. The P protein binds the alpha-amino group of glycine through its pyridoxal phosphate cofactor; CO(2) is released and the remaining methylamine moiety is then transferred to the lipoamide cofactor of the H protein. The chain is Probable glycine dehydrogenase (decarboxylating) subunit 1 from Legionella pneumophila subsp. pneumophila (strain Philadelphia 1 / ATCC 33152 / DSM 7513).